Consider the following 86-residue polypeptide: MANIKSQKKRILTNEKARLRNNAVKSELKTAIRAVNTAVESADKDAAGTALVAASRKLDKAVSKGVIHKNNAANRKSAISKKVNAL.

Belongs to the bacterial ribosomal protein bS20 family.

Functionally, binds directly to 16S ribosomal RNA. The polypeptide is Small ribosomal subunit protein bS20 (Paenarthrobacter aurescens (strain TC1)).